The following is a 351-amino-acid chain: Uroporphyrinogen decarboxylase (351 aa).

Residues arginine 25 to arginine 29, aspartate 74, tyrosine 151, serine 206, and histidine 325 each bind substrate.

The protein belongs to the uroporphyrinogen decarboxylase family. As to quaternary structure, homodimer.

Its subcellular location is the cytoplasm. The catalysed reaction is uroporphyrinogen III + 4 H(+) = coproporphyrinogen III + 4 CO2. The protein operates within porphyrin-containing compound metabolism; protoporphyrin-IX biosynthesis; coproporphyrinogen-III from 5-aminolevulinate: step 4/4. In terms of biological role, catalyzes the decarboxylation of four acetate groups of uroporphyrinogen-III to yield coproporphyrinogen-III. The polypeptide is Uroporphyrinogen decarboxylase (Chlorobium chlorochromatii (strain CaD3)).